Here is a 325-residue protein sequence, read N- to C-terminus: Intelectin-2 (325 aa).

The N-terminal stretch at 1–26 (MLSMLRTMTRLCFLLFFSVATSGCSA) is a signal peptide. The Fibrinogen C-terminal domain occupies 44–267 (FSFSSLPRSC…AANALCAGIK (224 aa)). Cys53 and Cys82 are disulfide-bonded. His98, Glu99, Asp101, Gly104, Gly109, Asp110, and Asp145 together coordinate Ca(2+). 3 cysteine pairs are disulfide-bonded: Cys106/Cys292, Cys211/Cys271, and Cys263/Cys277. The Ca(2+) site is built by Asn272, Glu274, and Asp294. An a carbohydrate-binding site is contributed by 274–275 (EH).

As to expression, expressed only in the small intestine.

The protein resides in the secreted. Its function is as follows. May play a role in the defense system against pathogens. The polypeptide is Intelectin-2 (ITLN2) (Homo sapiens (Human)).